Reading from the N-terminus, the 267-residue chain is 4-hydroxy-tetrahydrodipicolinate reductase (267 aa).

NAD(+) contacts are provided by residues glycine 8–methionine 13 and aspartate 34. Residue arginine 35 coordinates NADP(+). NAD(+) contacts are provided by residues glycine 98–threonine 100 and alanine 122–phenylalanine 125. Histidine 155 serves as the catalytic Proton donor/acceptor. Histidine 156 contacts (S)-2,3,4,5-tetrahydrodipicolinate. Catalysis depends on lysine 159, which acts as the Proton donor. Glycine 165 to threonine 166 is a binding site for (S)-2,3,4,5-tetrahydrodipicolinate.

This sequence belongs to the DapB family.

Its subcellular location is the cytoplasm. The enzyme catalyses (S)-2,3,4,5-tetrahydrodipicolinate + NAD(+) + H2O = (2S,4S)-4-hydroxy-2,3,4,5-tetrahydrodipicolinate + NADH + H(+). It carries out the reaction (S)-2,3,4,5-tetrahydrodipicolinate + NADP(+) + H2O = (2S,4S)-4-hydroxy-2,3,4,5-tetrahydrodipicolinate + NADPH + H(+). It functions in the pathway amino-acid biosynthesis; L-lysine biosynthesis via DAP pathway; (S)-tetrahydrodipicolinate from L-aspartate: step 4/4. In terms of biological role, catalyzes the conversion of 4-hydroxy-tetrahydrodipicolinate (HTPA) to tetrahydrodipicolinate. The chain is 4-hydroxy-tetrahydrodipicolinate reductase from Ectopseudomonas mendocina (strain ymp) (Pseudomonas mendocina).